The sequence spans 275 residues: MYNVIGVRFKKAGKIYYFDPNGFHIEHDSCVIVETVRGVEYGQVVIANKQVDEHDVVLPLRKVIRVADDRDLLIVEENKQEALSAFDICQKKVIEHGLDMKLVDVEFTFDRNKVIFYFTADGRVDFRELVKDLASIFKTRIELRQIGVRDEAKMLGGIGPCGRMLCCSTFLGDFEPVSIKMAKDQNLSLNPTKISGLCGRLMCCLKYENDEYETAKEQLPDIGEMITTANGPAKVVGLNILERVLQVELINREKVIEYTWEELLEEGVVSAQTTD.

A PSP1 C-terminal domain is found at 61–146 (RKVIRVADDR…FKTRIELRQI (86 aa)).

It localises to the cytoplasm. In terms of biological role, essential for the phosphorelay during initiation of sporulation. May control the level of phosphorylated spo0A through spo0E activity during sporulation. This Bacillus subtilis (strain 168) protein is Stage 0 sporulation protein YaaT (yaaT).